We begin with the raw amino-acid sequence, 369 residues long: Flagellar P-ring protein (369 aa).

Residues 1 to 24 form the signal peptide; the sequence is MKTLHRCIGVALLALGALAGTAHA.

The protein belongs to the FlgI family. In terms of assembly, the basal body constitutes a major portion of the flagellar organelle and consists of four rings (L,P,S, and M) mounted on a central rod.

The protein resides in the periplasm. It localises to the bacterial flagellum basal body. Assembles around the rod to form the L-ring and probably protects the motor/basal body from shearing forces during rotation. In Ralstonia nicotianae (strain ATCC BAA-1114 / GMI1000) (Ralstonia solanacearum), this protein is Flagellar P-ring protein.